We begin with the raw amino-acid sequence, 120 residues long: Large ribosomal subunit protein uL18 (120 aa).

Belongs to the universal ribosomal protein uL18 family. As to quaternary structure, part of the 50S ribosomal subunit; part of the 5S rRNA/L5/L18/L25 subcomplex. Contacts the 5S and 23S rRNAs.

Functionally, this is one of the proteins that bind and probably mediate the attachment of the 5S RNA into the large ribosomal subunit, where it forms part of the central protuberance. The sequence is that of Large ribosomal subunit protein uL18 from Methylocella silvestris (strain DSM 15510 / CIP 108128 / LMG 27833 / NCIMB 13906 / BL2).